The sequence spans 190 residues: ATP synthase subunit b 1 (190 aa).

Residues Asp35–Pro55 form a helical membrane-spanning segment.

It belongs to the ATPase B chain family. In terms of assembly, F-type ATPases have 2 components, F(1) - the catalytic core - and F(0) - the membrane proton channel. F(1) has five subunits: alpha(3), beta(3), gamma(1), delta(1), epsilon(1). F(0) has three main subunits: a(1), b(2) and c(10-14). The alpha and beta chains form an alternating ring which encloses part of the gamma chain. F(1) is attached to F(0) by a central stalk formed by the gamma and epsilon chains, while a peripheral stalk is formed by the delta and b chains.

Its subcellular location is the cell inner membrane. F(1)F(0) ATP synthase produces ATP from ADP in the presence of a proton or sodium gradient. F-type ATPases consist of two structural domains, F(1) containing the extramembraneous catalytic core and F(0) containing the membrane proton channel, linked together by a central stalk and a peripheral stalk. During catalysis, ATP synthesis in the catalytic domain of F(1) is coupled via a rotary mechanism of the central stalk subunits to proton translocation. Functionally, component of the F(0) channel, it forms part of the peripheral stalk, linking F(1) to F(0). This is ATP synthase subunit b 1 from Jannaschia sp. (strain CCS1).